Here is a 427-residue protein sequence, read N- to C-terminus: Glutamate-1-semialdehyde 2,1-aminomutase (427 aa).

Lys-265 is subject to N6-(pyridoxal phosphate)lysine.

It belongs to the class-III pyridoxal-phosphate-dependent aminotransferase family. HemL subfamily. In terms of assembly, homodimer. Requires pyridoxal 5'-phosphate as cofactor.

It localises to the cytoplasm. The enzyme catalyses (S)-4-amino-5-oxopentanoate = 5-aminolevulinate. The protein operates within porphyrin-containing compound metabolism; protoporphyrin-IX biosynthesis; 5-aminolevulinate from L-glutamyl-tRNA(Glu): step 2/2. The sequence is that of Glutamate-1-semialdehyde 2,1-aminomutase from Burkholderia vietnamiensis (strain G4 / LMG 22486) (Burkholderia cepacia (strain R1808)).